Consider the following 148-residue polypeptide: Deoxyuridine 5'-triphosphate nucleotidohydrolase (148 aa).

Substrate is bound by residues 67–69, N80, 84–86, and M94; these read RSG and LID.

This sequence belongs to the dUTPase family. Requires Mg(2+) as cofactor.

The enzyme catalyses dUTP + H2O = dUMP + diphosphate + H(+). Its pathway is pyrimidine metabolism; dUMP biosynthesis; dUMP from dCTP (dUTP route): step 2/2. This enzyme is involved in nucleotide metabolism: it produces dUMP, the immediate precursor of thymidine nucleotides and it decreases the intracellular concentration of dUTP so that uracil cannot be incorporated into DNA. This chain is Deoxyuridine 5'-triphosphate nucleotidohydrolase, found in Burkholderia ambifaria (strain ATCC BAA-244 / DSM 16087 / CCUG 44356 / LMG 19182 / AMMD) (Burkholderia cepacia (strain AMMD)).